A 360-amino-acid polypeptide reads, in one-letter code: Serine/threonine-protein kinase SRK2H (360 aa).

The 257-residue stretch at 4-260 (YEVVKDLGAG…LKEIKKHPWY (257 aa)) folds into the Protein kinase domain. Residues 10-18 (LGAGNFGVA) and K33 each bind ATP. The Proton acceptor role is filled by D123. Residues 298 to 360 (EARNPAPSSN…AHSCQEPPKA (63 aa)) are disordered. Over residues 313–343 (DDDEEDVEDEVEEEEEEEEEEEEEEEEEEDE) the composition is skewed to acidic residues. The span at 344–360 (YEKHVKEAHSCQEPPKA) shows a compositional bias: basic and acidic residues.

Belongs to the protein kinase superfamily. Ser/Thr protein kinase family. As to expression, expressed in seedlings.

It catalyses the reaction L-seryl-[protein] + ATP = O-phospho-L-seryl-[protein] + ADP + H(+). The catalysed reaction is L-threonyl-[protein] + ATP = O-phospho-L-threonyl-[protein] + ADP + H(+). The protein is Serine/threonine-protein kinase SRK2H (SRK2H) of Arabidopsis thaliana (Mouse-ear cress).